Consider the following 398-residue polypeptide: Acetate kinase (398 aa).

N7 contributes to the Mg(2+) binding site. K14 contacts ATP. R90 is a substrate binding site. D147 (proton donor/acceptor) is an active-site residue. Residues 207-211 (HLGNG), 282-284 (DMR), and 330-334 (GIGEN) each bind ATP. Position 383 (E383) interacts with Mg(2+).

The protein belongs to the acetokinase family. In terms of assembly, homodimer. It depends on Mg(2+) as a cofactor. Mn(2+) serves as cofactor.

Its subcellular location is the cytoplasm. It carries out the reaction acetate + ATP = acetyl phosphate + ADP. It participates in metabolic intermediate biosynthesis; acetyl-CoA biosynthesis; acetyl-CoA from acetate: step 1/2. In terms of biological role, catalyzes the formation of acetyl phosphate from acetate and ATP. Can also catalyze the reverse reaction. The sequence is that of Acetate kinase from Symbiobacterium thermophilum (strain DSM 24528 / JCM 14929 / IAM 14863 / T).